The chain runs to 309 residues: Formimidoylglutamase (309 aa).

Mn(2+) contacts are provided by histidine 128, aspartate 153, histidine 155, aspartate 157, cysteine 240, and aspartate 242.

It belongs to the arginase family. Mn(2+) serves as cofactor.

It catalyses the reaction N-formimidoyl-L-glutamate + H2O = formamide + L-glutamate. Its pathway is amino-acid degradation; L-histidine degradation into L-glutamate; L-glutamate from N-formimidoyl-L-glutamate (hydrolase route): step 1/1. Functionally, catalyzes the conversion of N-formimidoyl-L-glutamate to L-glutamate and formamide. This chain is Formimidoylglutamase, found in Staphylococcus carnosus (strain TM300).